We begin with the raw amino-acid sequence, 88 residues long: Hemotin (88 aa).

The Lumenal portion of the chain corresponds to 1–14 (MDCFKVFEVVFQSE). A helical membrane pass occupies residues 15 to 37 (INPLLLIPAVATIALTLCCYCYH). Topologically, residues 38–88 (GYQWIRDRRTARIEEQQAQLPLPLSRISITPGCSMVATTKLTHSRNSVDIY) are cytoplasmic.

As to quaternary structure, interacts with 14-3-3zeta. Expressed in hemocytes.

It localises to the early endosome membrane. Negatively regulates early endosome maturation by binding to and repressing the activity of 14-3-3zeta which prevents the 14-3-3zeta-mediated activation of phosphoinositide 3-kinase Pi3K68D. This, in turn, inhibits the Pi3K68D-mediated conversion of phosphatidylinositol to phosphatidylinositol-3-phosphate and prevents progression of early endosomes through the maturation process which regulates subsequent steps of phagocytic processing. The polypeptide is Hemotin (Drosophila melanogaster (Fruit fly)).